Reading from the N-terminus, the 466-residue chain is Ribulose bisphosphate carboxylase large chain (466 aa).

Position 5 is an N6,N6,N6-trimethyllysine (Lys5). Substrate contacts are provided by Asn114 and Thr164. Residue Lys166 is the Proton acceptor of the active site. A substrate-binding site is contributed by Lys168. Lys192, Asp194, and Glu195 together coordinate Mg(2+). Lys192 carries the N6-carboxylysine modification. His285 functions as the Proton acceptor in the catalytic mechanism. Residues Arg286, His318, and Ser370 each coordinate substrate.

It belongs to the RuBisCO large chain family. Type I subfamily. Heterohexadecamer of 8 large chains and 8 small chains; disulfide-linked. The disulfide link is formed within the large subunit homodimers. Requires Mg(2+) as cofactor. Post-translationally, the disulfide bond which can form in the large chain dimeric partners within the hexadecamer appears to be associated with oxidative stress and protein turnover.

Its subcellular location is the plastid. The protein resides in the chloroplast. The enzyme catalyses 2 (2R)-3-phosphoglycerate + 2 H(+) = D-ribulose 1,5-bisphosphate + CO2 + H2O. It carries out the reaction D-ribulose 1,5-bisphosphate + O2 = 2-phosphoglycolate + (2R)-3-phosphoglycerate + 2 H(+). RuBisCO catalyzes two reactions: the carboxylation of D-ribulose 1,5-bisphosphate, the primary event in carbon dioxide fixation, as well as the oxidative fragmentation of the pentose substrate in the photorespiration process. Both reactions occur simultaneously and in competition at the same active site. This is Ribulose bisphosphate carboxylase large chain from Vitis aestivalis (Grape).